A 513-amino-acid polypeptide reads, in one-letter code: Na(+)/H(+) antiporter NhaB (513 aa).

12 helical membrane-spanning segments follow: residues 23-43 (LALI…PFVA), 52-72 (IFTL…LLAI), 97-117 (LLLM…LFIF), 120-140 (LLLS…AAAF), 144-164 (FLDA…FYGI), 202-222 (LMMH…VGEP), 238-258 (FFLR…LTCL), 303-323 (AIIG…VGLI), 348-368 (TESL…AVII), 391-411 (LFYI…VGTI), 447-467 (ATPN…APLI), and 475-495 (VWMA…CVEF).

Belongs to the NhaB Na(+)/H(+) (TC 2.A.34) antiporter family.

Its subcellular location is the cell inner membrane. The catalysed reaction is 2 Na(+)(in) + 3 H(+)(out) = 2 Na(+)(out) + 3 H(+)(in). Na(+)/H(+) antiporter that extrudes sodium in exchange for external protons. The sequence is that of Na(+)/H(+) antiporter NhaB from Escherichia coli O45:K1 (strain S88 / ExPEC).